Consider the following 191-residue polypeptide: Fe/S biogenesis protein NfuA (191 aa).

Positions 149 and 152 each coordinate [4Fe-4S] cluster.

The protein belongs to the NfuA family. In terms of assembly, homodimer. [4Fe-4S] cluster serves as cofactor.

In terms of biological role, involved in iron-sulfur cluster biogenesis. Binds a 4Fe-4S cluster, can transfer this cluster to apoproteins, and thereby intervenes in the maturation of Fe/S proteins. Could also act as a scaffold/chaperone for damaged Fe/S proteins. This Edwardsiella ictaluri (strain 93-146) protein is Fe/S biogenesis protein NfuA.